The following is a 144-amino-acid chain: Protein E6 (144 aa).

2 zinc fingers span residues 33-69 and 105-140; these read CKFC…CQYC and CLGC…CSLC.

It belongs to the papillomaviridae E6 protein family. Forms homodimers. Interacts with ubiquitin-protein ligase UBE3A/E6-AP; this interaction stimulates UBE3A ubiquitin activity. Interacts with host BAK1.

The protein localises to the host cytoplasm. It localises to the host nucleus. Its function is as follows. Plays a major role in the induction and maintenance of cellular transformation. E6 associates with host UBE3A/E6-AP ubiquitin-protein ligase and modulates its activity. Protects host keratinocytes from apoptosis by mediating the degradation of host BAK1. May also inhibit host immune response. The chain is Protein E6 from Canine oral papillomavirus (strain Y62) (COPV).